We begin with the raw amino-acid sequence, 91 residues long: Sec-independent protein translocase protein TatA (91 aa).

Residues phenylalanine 3 to glycine 23 traverse the membrane as a helical segment. The interval aspartate 57 to valine 91 is disordered. Positions threonine 59–valine 72 are enriched in low complexity.

It belongs to the TatA/E family. In terms of assembly, forms a complex with TatC.

The protein localises to the cell inner membrane. In terms of biological role, part of the twin-arginine translocation (Tat) system that transports large folded proteins containing a characteristic twin-arginine motif in their signal peptide across membranes. TatA could form the protein-conducting channel of the Tat system. The sequence is that of Sec-independent protein translocase protein TatA from Synechococcus elongatus (strain ATCC 33912 / PCC 7942 / FACHB-805) (Anacystis nidulans R2).